A 219-amino-acid polypeptide reads, in one-letter code: uncharacterized protein (219 aa).

The segment covering 139 to 154 (PRKIKQKKKTKKKRPS) has biased composition (basic residues). Positions 139–160 (PRKIKQKKKTKKKRPSKSAPKT) are disordered. A LysM domain is found at 159–217 (KTYTVKKGDTLWDLAGKFYGDSTKWRKIWKVNKKAMIKRSKRNIRQPGHWIFPGQKLKI).

This is an uncharacterized protein from Bacillus subtilis (strain 168).